The chain runs to 172 residues: Ubiquitin-conjugating enzyme E2 2 (172 aa).

In terms of domain architecture, UBC core spans 4-150; it reads PARRRLMRDF…VKETVEKSWE (147 aa). Cys88 serves as the catalytic Glycyl thioester intermediate. A Phosphoserine; by SGV1 modification is found at Ser120. A disordered region spans residues 145–172; the sequence is VEKSWEDDMDDMDDDDDDDDDDDDDEAD. Residues 151–172 show a composition bias toward acidic residues; that stretch reads DDMDDMDDDDDDDDDDDDDEAD.

The protein belongs to the ubiquitin-conjugating enzyme family. In terms of assembly, forms a heterodimer complexes with the E3 enzymes BRE1, RAD18 and UBR1. Also interacts with UBR2, RTF1, PAF1 and the RNA polymerase II hyperphosphorylated form. The interaction with RNA polymerase II is BRE1- and PAF1-dependent. Post-translationally, the N-terminus is blocked.

The protein localises to the cytoplasm. It is found in the nucleus. It carries out the reaction S-ubiquitinyl-[E1 ubiquitin-activating enzyme]-L-cysteine + [E2 ubiquitin-conjugating enzyme]-L-cysteine = [E1 ubiquitin-activating enzyme]-L-cysteine + S-ubiquitinyl-[E2 ubiquitin-conjugating enzyme]-L-cysteine.. Its pathway is protein modification; protein ubiquitination. Functionally, E2 ubiquitin-conjugating enzyme that accepts ubiquitin from the ubiquitin-activating enzyme E1 and transfers it to a E3 ubiquitin-protein ligase. In association with the E3 enzyme BRE1 and LGE1, it plays a role in transcription regulation by catalyzing the monoubiquitination of histone H2B to form H2BK123ub1. H2BK123ub1 gives a specific tag for epigenetic transcriptional activation, elongation by RNA polymerase II, telomeric silencing, and is also a prerequisite for H3K4me and H3K79me formation. In association with the E3 enzyme RAD18, it catalyzes the monoubiquitination of POL30 'Lys-164', involved in postreplication repair of UV-damaged DNA. The RAD6/UBC2-RAD18 complex is also involved in prevention of spontaneous mutations caused by 7,8-dihydro-8-oxoguanine. In association with the E3 enzyme UBR1, is involved in N-end rule-dependent protein degradation. Also involved in sporulation. This Saccharomyces cerevisiae (strain ATCC 204508 / S288c) (Baker's yeast) protein is Ubiquitin-conjugating enzyme E2 2 (RAD6).